A 467-amino-acid chain; its full sequence is Fumarate hydratase class II (467 aa).

Substrate-binding positions include 98-100, R126, 129-132, 139-141, and T187; these read SGT, HPND, and SSN. H188 serves as the catalytic Proton donor/acceptor. S318 is a catalytic residue. Substrate contacts are provided by residues S319 and 324–326; that span reads KVN.

The protein belongs to the class-II fumarase/aspartase family. Fumarase subfamily. Homotetramer.

It localises to the cytoplasm. The enzyme catalyses (S)-malate = fumarate + H2O. Its pathway is carbohydrate metabolism; tricarboxylic acid cycle; (S)-malate from fumarate: step 1/1. Functionally, involved in the TCA cycle. Catalyzes the stereospecific interconversion of fumarate to L-malate. This chain is Fumarate hydratase class II, found in Shigella flexneri.